The chain runs to 235 residues: Elongation factor Tu, chloroplastic (235 aa).

Residues 1-125 (KNMITGAAQM…SVDSYIPTPI (125 aa)) form the tr-type G domain. 47–50 (NKED) is a GTP binding site.

It belongs to the TRAFAC class translation factor GTPase superfamily. Classic translation factor GTPase family. EF-Tu/EF-1A subfamily.

Its subcellular location is the plastid. The protein resides in the chloroplast. It catalyses the reaction GTP + H2O = GDP + phosphate + H(+). GTP hydrolase that promotes the GTP-dependent binding of aminoacyl-tRNA to the A-site of ribosomes during protein biosynthesis. The polypeptide is Elongation factor Tu, chloroplastic (tufA) (Costaria costata (Five-ribbed kelp)).